The sequence spans 81 residues: MATSGRLLCLCLVLGLIFESLGHPVMGEKRAGENASPSARSLPKRLGNVEAPCGNQTCQFGCCEDDVCRELNCEHVDFPNY.

The N-terminal stretch at 1–21 (MATSGRLLCLCLVLGLIFESL) is a signal peptide. A propeptide spanning residues 22-45 (GHPVMGEKRAGENASPSARSLPKR) is cleaved from the precursor.

This sequence belongs to the teretoxin M (TM) superfamily. In terms of processing, contains 3 disulfide bonds. Expressed by the venom duct.

Its subcellular location is the secreted. This chain is Teretoxin Tsu6.8, found in Terebra subulata (Chocolate spotted auger).